A 467-amino-acid chain; its full sequence is Cysteine--tRNA ligase (467 aa).

A Zn(2+)-binding site is contributed by Cys-28. The 'HIGH' region motif lies at 30 to 40 (PTVYNYIHVGN). Zn(2+)-binding residues include Cys-212, His-237, and Glu-241. The short motif at 269-273 (KMSKS) is the 'KMSKS' region element. Lys-272 lines the ATP pocket.

It belongs to the class-I aminoacyl-tRNA synthetase family. Monomer. The cofactor is Zn(2+).

It is found in the cytoplasm. It catalyses the reaction tRNA(Cys) + L-cysteine + ATP = L-cysteinyl-tRNA(Cys) + AMP + diphosphate. The sequence is that of Cysteine--tRNA ligase from Oenococcus oeni (strain ATCC BAA-331 / PSU-1).